We begin with the raw amino-acid sequence, 540 residues long: Testis-specific chromodomain protein Y 1 (540 aa).

A Chromo domain is found at 6–66 (FEVEAIVDKR…RQTEKQKKLT (61 aa)). A disordered region spans residues 76 to 106 (NNARRRTSRSTKANYSKNSPKTPVTDKHHRS). Residues 87 to 97 (KANYSKNSPKT) show a composition bias toward polar residues.

In terms of assembly, interacts (via chromo domain) with histone H3K9me3. As to expression, testis-specific. Detected in spermatids (at protein level).

The protein localises to the nucleus. The catalysed reaction is L-lysyl-[protein] + acetyl-CoA = N(6)-acetyl-L-lysyl-[protein] + CoA + H(+). Its function is as follows. Has histone acetyltransferase activity, with a preference for histone H4. The sequence is that of Testis-specific chromodomain protein Y 1 (CDY1) from Homo sapiens (Human).